The following is a 139-amino-acid chain: Cofilin (139 aa).

The ADF-H domain maps to 4 to 135; it reads GVKVSQECLD…SYDTVLDKVS (132 aa).

Belongs to the actin-binding proteins ADF family.

It localises to the cytoplasm. Its subcellular location is the cytoskeleton. The protein resides in the nucleus matrix. In terms of biological role, controls reversibly actin polymerization and depolymerization in a pH-sensitive manner. It has the ability to bind G- and F-actin in a 1:1 ratio of cofilin to actin. Binding to F-actin is regulated by tropomyosin. It is the major component of intranuclear and cytoplasmic actin rods. Required for accumulation of actin at the cell division site via depolymerizing actin at the cell ends. In association with myosin II has a role in the assembly of the contractile ring via severing actin filaments. Involved in the maintenance of the contractile ring once formed. In association with profilin and capping protein, has a role in the mitotic reorganization of the actin cytoskeleton. This chain is Cofilin (COF1), found in Mycosarcoma maydis (Corn smut fungus).